Here is a 651-residue protein sequence, read N- to C-terminus: MRLFIAEKPSLARAIADVLPKPHQRGDGFIKCGDNDVVTWCVGHLLEQAEPDAYDPKFKQWRLEHLPIIPEKWQLLPRKEVKKQLSVVEKLIHQADTLVNAGDPDREGQLLVDEVFSYANLSAEKRDKILRCLISDLNPSAVEKAVKKLQPNRNFIPLATSALARARADWLYGINMTRAYTIRGRQTGYDGVLSVGRVQTPVLGLIVRRDLEIEHFQPKDFFEVQAWVNPESKEEKTPEKSTALFSALWQPSKACEDYQDDDGRVLSKGLAEKVVKRITNQPAEVTEYKDVREKETAPLPYSLSALQIDAAKRFGMSAQAVLDTCQRLYETHRLITYPRSDCRYLPEEHFAERHNVLNAISTHCEAYQVLPNVILTEQRNRCWNDKKVEAHHAIIPTAKNRPVNLTQEERNIYSLIARQYLMQFCPDAEYRKSKITLNIAGGTFIAQARNLQTAGWKELLGKEDDTENQEPLLPIVKKGQILHCERGEVMSKKTQPPKPFTDATLLSAMTGIARFVQDKELKKILRETDGLGTEATRAGIIELLFKRGFLTKKGRNIHSTETGRILIQALPNIATQPDMTAHWESQLTDISQKQATYQQFMHNLNQILPDLVRFVDLNALRQLSRIKMIKSDRAKPKSAVKKSSKSNGETD.

A Toprim domain is found at 1–134 (MRLFIAEKPS…KRDKILRCLI (134 aa)). Mg(2+) contacts are provided by E7, D103, and D105. Positions 155–612 (FIPLATSALA…NLNQILPDLV (458 aa)) constitute a Topo IA-type catalytic domain. Positions 194-199 (SVGRVQ) are interaction with DNA. Y337 serves as the catalytic O-(5'-phospho-DNA)-tyrosine intermediate. The interval 631-651 (SDRAKPKSAVKKSSKSNGETD) is disordered.

This sequence belongs to the type IA topoisomerase family. Mg(2+) serves as cofactor.

The catalysed reaction is ATP-independent breakage of single-stranded DNA, followed by passage and rejoining.. In terms of biological role, releases the supercoiling and torsional tension of DNA, which is introduced during the DNA replication and transcription, by transiently cleaving and rejoining one strand of the DNA duplex. Introduces a single-strand break via transesterification at a target site in duplex DNA. The scissile phosphodiester is attacked by the catalytic tyrosine of the enzyme, resulting in the formation of a DNA-(5'-phosphotyrosyl)-enzyme intermediate and the expulsion of a 3'-OH DNA strand. The free DNA strand then undergoes passage around the unbroken strand, thus removing DNA supercoils. Finally, in the religation step, the DNA 3'-OH attacks the covalent intermediate to expel the active-site tyrosine and restore the DNA phosphodiester backbone. The protein is DNA topoisomerase 3 of Haemophilus influenzae (strain ATCC 51907 / DSM 11121 / KW20 / Rd).